A 248-amino-acid polypeptide reads, in one-letter code: Serine/arginine-rich splicing factor 1 (248 aa).

Ser-2 carries the post-translational modification N-acetylserine. The residue at position 2 (Ser-2) is a Phosphoserine. Residues 16–91 (CRIYVGNLPP…YRLRVEFPRS (76 aa)) enclose the RRM 1 domain. A Glycyl lysine isopeptide (Lys-Gly) (interchain with G-Cter in SUMO2) cross-link involves residue Lys-30. An N6-acetyllysine; alternate modification is found at Lys-38. Lys-38 is covalently cross-linked (Glycyl lysine isopeptide (Lys-Gly) (interchain with G-Cter in SUMO2); alternate). Positions 88–134 (FPRSGRGTGRGGGGGGGGGAPRGRYGPPSRRSENRVVVSGLPPSGSW) are disordered. 3 positions are modified to asymmetric dimethylarginine; alternate: Arg-93, Arg-97, and Arg-109. Omega-N-methylarginine; alternate is present on residues Arg-93, Arg-97, and Arg-109. Over residues 93-108 (RGTGRGGGGGGGGGAP) the composition is skewed to gly residues. An Omega-N-methylarginine modification is found at Arg-111. In terms of domain architecture, RRM 2 spans 121-195 (NRVVVSGLPP…ETAYIRVKVD (75 aa)). Ser-133 is subject to Phosphoserine. Lys-179 is subject to N6-acetyllysine. Residues 191–248 (RVKVDGPRSPSYGRSRSRSRSRSRSRSRSNSRSRSYSPRRSRGSPRYSPRHSRSRSRT) are disordered. Positions 198-247 (RSPSYGRSRSRSRSRSRSRSRSNSRSRSYSPRRSRGSPRYSPRHSRSRSR) are interaction with SAFB1. 2 positions are modified to phosphoserine: Ser-199 and Ser-201. Tyr-202 is subject to Phosphotyrosine. Residues Ser-205, Ser-207, Ser-209, Ser-231, Ser-234, and Ser-238 each carry the phosphoserine modification. Basic residues predominate over residues 205–248 (SRSRSRSRSRSRSRSNSRSRSYSPRRSRGSPRYSPRHSRSRSRT).

It belongs to the splicing factor SR family. As to quaternary structure, consists of two polypeptides of p32 and p33. Identified in the spliceosome C complex. Component of a ribonucleoprotein complex containing mRNAs and RNA-binding proteins including DDX5, HNRNPH2 and SRSF1 as well as splicing regulator ARVCF. In vitro, self-associates and binds SRSF2, SNRNP70 and U2AF1 but not U2AF2. Binds SREK1/SFRS12. Interacts with SAFB/SAFB1. Interacts with PSIP1/LEDGF. Interacts with RSRC1 (via Arg/Ser-rich domain). Interacts with ZRSR2/U2AF1-RS2. Interacts with CCDC55 (via C-terminus). Interacts with SRPK1 and a sliding docking interaction is essential for its sequential and processive phosphorylation by SRPK1. Interacts with NXF1. Interacts with CCNL1, CCNL2 and CDK11B. Interacts with RRP1B. Interacts (when phosphorylated in its RS domain) with TNPO3; promoting nuclear import. Interacts with ILDR1 (via C-terminus) and ILDR2. In terms of processing, phosphorylated by CLK1, CLK2, CLK3 and CLK4. Phosphorylated by SRPK1 at multiple serines in its RS domain via a directional (C-terminal to N-terminal) and a dual-track mechanism incorporating both processive phosphorylation (in which the kinase stays attached to the substrate after each round of phosphorylation) and distributive phosphorylation steps (in which the kinase and substrate dissociate after each phosphorylation event). The RS domain of SRSF1 binds to a docking groove in the large lobe of the kinase domain of SRPK1 and this induces certain structural changes in SRPK1 and/or RRM 2 domain of SRSF1, allowing RRM 2 to bind the kinase and initiate phosphorylation. The cycles continue for several phosphorylation steps in a processive manner (steps 1-8) until the last few phosphorylation steps (approximately steps 9-12). During that time, a mechanical stress induces the unfolding of the beta-4 motif in RRM 2, which then docks at the docking groove of SRPK1. This also signals RRM 2 to begin to dissociate, which facilitates SRSF1 dissociation after phosphorylation is completed. Post-translationally, asymmetrically dimethylated at arginines, probably by PRMT1, methylation promotes localization to nuclear speckles.

It localises to the cytoplasm. The protein localises to the nucleus speckle. Functionally, plays a role in preventing exon skipping, ensuring the accuracy of splicing and regulating alternative splicing. Interacts with other spliceosomal components, via the RS domains, to form a bridge between the 5'- and 3'-splice site binding components, U1 snRNP and U2AF. Can stimulate binding of U1 snRNP to a 5'-splice site-containing pre-mRNA. Binds to purine-rich RNA sequences, either the octamer, 5'-RGAAGAAC-3' (r=A or G) or the decamers, AGGACAGAGC/AGGACGAAGC. Binds preferentially to the 5'-CGAGGCG-3' motif in vitro. Three copies of the octamer constitute a powerful splicing enhancer in vitro, the ASF/SF2 splicing enhancer (ASE) which can specifically activate ASE-dependent splicing. May function as export adapter involved in mRNA nuclear export through the TAP/NXF1 pathway. This is Serine/arginine-rich splicing factor 1 (SRSF1) from Bos taurus (Bovine).